The primary structure comprises 465 residues: Sushi repeat-containing protein SRPX2 (465 aa).

The N-terminal stretch at 1 to 23 is a signal peptide; that stretch reads MASQLTQRGALFLLFFLTPAVTP. Sushi domains lie at 69–119, 120–178, and 262–321; these read ATCY…YCRQ, MRCH…VCVD, and RRCP…ICAP. Intrachain disulfides connect C71–C105, C91–C117, C122–C163, and C149–C176. The region spanning 177 to 261 is the HYR domain; sequence VDIDPPKIRC…SCKFIVKVQV (85 aa). Disulfide bonds link C264–C306 and C292–C319.

As to quaternary structure, forms homooligomers. Interacts with PLAUR (via the UPAR/Ly6 domains), ADAMTS4 and CTSB. Interacts with HGF; the interaction increases the mitogenic activity of HGF. In terms of processing, contains chondroitin sulfate chains. Expressed in neurons of the rolandic area of the brain (at protein level). Highly expressed in the brain, placenta, lung, trachea, uterus, adrenal gland, heart, ovary and placenta. Weakly expressed in the peripheral blood, brain and bone marrow. Expressed in numerous cancer cell lines and in gastrointestinal cancer cells. Higher levels found in colorectal cancers than in normal colonic mucosa.

It localises to the secreted. It is found in the cytoplasm. The protein localises to the cell surface. Its subcellular location is the synapse. Functionally, acts as a ligand for the urokinase plasminogen activator surface receptor. Plays a role in angiogenesis by inducing endothelial cell migration and the formation of vascular network (cords). Involved in cellular migration and adhesion. Increases the phosphorylation levels of FAK. Interacts with and increases the mitogenic activity of HGF. Promotes synapse formation. May have a role in the perisylvian region, critical for language and cognitive development. The polypeptide is Sushi repeat-containing protein SRPX2 (SRPX2) (Homo sapiens (Human)).